The following is a 2922-amino-acid chain: Small ribosomal subunit protein uS4c (2922 aa).

One can recognise an S4 RNA-binding domain in the interval 111–174 (MRLDNIVFRL…ISMELVSRFL (64 aa)).

The protein belongs to the universal ribosomal protein uS4 family. As to quaternary structure, part of the 30S ribosomal subunit. Contacts protein S5. The interaction surface between S4 and S5 is involved in control of translational fidelity.

Its subcellular location is the plastid. The protein resides in the chloroplast. In terms of biological role, one of the primary rRNA binding proteins, it binds directly to 16S rRNA where it nucleates assembly of the body of the 30S subunit. Functionally, with S5 and S12 plays an important role in translational accuracy. This Stigeoclonium helveticum (Green alga) protein is Small ribosomal subunit protein uS4c (rps4).